Here is a 493-residue protein sequence, read N- to C-terminus: Cysteine--tRNA ligase (493 aa).

Cys31 lines the Zn(2+) pocket. Residues Pro33–His43 carry the 'HIGH' region motif. Zn(2+) is bound by residues Cys226, His251, and Glu255. The 'KMSKS' region motif lies at Lys283 to Ser287. Residue Lys286 participates in ATP binding.

It belongs to the class-I aminoacyl-tRNA synthetase family. Monomer. Requires Zn(2+) as cofactor.

Its subcellular location is the cytoplasm. The catalysed reaction is tRNA(Cys) + L-cysteine + ATP = L-cysteinyl-tRNA(Cys) + AMP + diphosphate. The polypeptide is Cysteine--tRNA ligase (Bacteroides thetaiotaomicron (strain ATCC 29148 / DSM 2079 / JCM 5827 / CCUG 10774 / NCTC 10582 / VPI-5482 / E50)).